Consider the following 282-residue polypeptide: ATP synthase subunit a (282 aa).

Transmembrane regions (helical) follow at residues 45–65 (AIHVDTMAISIALGFLFLWLF), 106–126 (IAPLALTIFVWVFLMNFMDLI), 160–179 (INATLGMSLSVFVLIVFYSI), 232–252 (LIFILIAILPWGVQWALSVPW), and 253–273 (AIFHILIIVLQAFIFMMLTIV).

It belongs to the ATPase A chain family. F-type ATPases have 2 components, CF(1) - the catalytic core - and CF(0) - the membrane proton channel. CF(1) has five subunits: alpha(3), beta(3), gamma(1), delta(1), epsilon(1). CF(0) has three main subunits: a(1), b(2) and c(9-12). The alpha and beta chains form an alternating ring which encloses part of the gamma chain. CF(1) is attached to CF(0) by a central stalk formed by the gamma and epsilon chains, while a peripheral stalk is formed by the delta and b chains.

Its subcellular location is the cell inner membrane. Its function is as follows. Key component of the proton channel; it plays a direct role in the translocation of protons across the membrane. In Marinomonas sp. (strain MWYL1), this protein is ATP synthase subunit a.